The primary structure comprises 458 residues: GTPase Der (458 aa).

EngA-type G domains lie at 3 to 167 (PVVV…PETE) and 176 to 351 (IKLA…AQYT). Residues 9–16 (GRPNVGKS), 56–60 (DTGGF), 119–122 (NKID), 182–189 (GRPNVGKS), 229–233 (DTAGL), and 294–297 (NKWD) contribute to the GTP site. The 85-residue stretch at 352–436 (FNIKTGELNN…PIRLFFREKP (85 aa)) folds into the KH-like domain.

Belongs to the TRAFAC class TrmE-Era-EngA-EngB-Septin-like GTPase superfamily. EngA (Der) GTPase family. As to quaternary structure, associates with the 50S ribosomal subunit.

Functionally, GTPase that plays an essential role in the late steps of ribosome biogenesis. This Desulfosudis oleivorans (strain DSM 6200 / JCM 39069 / Hxd3) (Desulfococcus oleovorans) protein is GTPase Der.